Here is a 2726-residue protein sequence, read N- to C-terminus: Filamin-C (2726 aa).

The actin-binding stretch occupies residues 1–260 (MMNNSNYSDA…VMTYLSQFPK (260 aa)). Residue Ser5 is modified to Phosphoserine. 2 Calponin-homology (CH) domains span residues 37 to 143 (KIQQ…LHYS) and 160 to 263 (QTPK…KAKL). 15 Filamin repeats span residues 271-369 (SKQL…EVNV), 371-469 (MALG…PVHV), 470-566 (AEAC…EVQV), 567-659 (SPEA…IAHI), 663-759 (PPDC…RVNV), 760-862 (GEGS…HIKV), 863-961 (DPSH…VVNV), 962-1057 (APPL…AVEG), 1058-1150 (VLPP…KATI), 1151-1245 (QPVF…RVHV), 1246-1345 (QPAV…RVGV), 1346-1438 (TEGC…RVPV), 1439-1534 (KDVV…KIKV), 1535-1631 (LPSH…RIHA), and 1636-1735 (DASK…HVLA). Residue Arg1003 is modified to Omega-N-methylarginine. A phosphoserine mark is found at Ser1162 and Ser1339. The tract at residues 1736–1759 (CDPLPHVEEPAEMLQMRQPYAPLR) is hinge 1. Filamin repeat units lie at residues 1760 to 1855 (PGTC…QFYV), 1856 to 1947 (DAIN…TAKI), 1948 to 2034 (TGDD…KILV), and 2037 to 2129 (SEIG…TVKV). Ser2043 bears the Phosphoserine mark. Positions 2163-2244 (GNWFQMVSAQ…FGSITRQQEG (82 aa)) are intradomain insert; mediate targeting to Z lines. The segment covering 2193–2210 (EISKTRGGETKREVRVEE) has biased composition (basic and acidic residues). A disordered region spans residues 2193–2214 (EISKTRGGETKREVRVEESTQV). The Filamin 20; mediates interaction with XIRP1 repeat unit spans residues 2212 to 2307 (TQVGGDPFPA…VPGSPFQFTV (96 aa)). Phosphoserine occurs at positions 2234 and 2237. Position 2239 is a phosphothreonine (Thr2239). Over residues 2241 to 2260 (QQEGEASSQDMTAQVTSPSG) the composition is skewed to polar residues. The tract at residues 2241–2261 (QQEGEASSQDMTAQVTSPSGK) is disordered. 3 Filamin repeats span residues 2310–2402 (LGEG…VVPV), 2404–2497 (SLSD…KIRV), and 2501–2593 (SQAG…KAKV). The tract at residues 2404-2725 (SLSDDARRLT…VPGSPFKVNV (322 aa)) is interaction with INPPL1. 6 positions are modified to phosphoserine: Ser2587, Ser2618, Ser2621, Ser2633, Ser2715, and Ser2719. Residues 2594–2630 (TGPRLSGGHSLHETSTVLVETVTKSSSSRGASYSSIP) form a hinge 2 region. Residues 2594 to 2726 (TGPRLSGGHS…PGSPFKVNVP (133 aa)) form a self-association site, tail region. The stretch at 2631-2725 (KFSSDASKVV…VPGSPFKVNV (95 aa)) is one Filamin 24 repeat.

The protein belongs to the filamin family. Homodimer; the filamin repeat 24 and the second hinge domain are important for dimer formation. Interacts with FLNB, INPPL1, ITGB1A, KCND2, MYOT, MYOZ1 and MYOZ3. Interacts with sarcoglycans SGCD and SGCG. Interacts (via filament repeats 17-18, 20-21 and 24) with USP25 (isoform USP25m only). Interacts with FBLIM1. Interacts with XIRP1; this interaction is mediated by filamin 20 repeat. Interacts with KY. Interacts with IGFN1. Interacts with MICALL2. Interacts with ANK3. Interacts with MICALL2. Interacts with ANK3. Interacts with SYNPO2. In terms of processing, ubiquitinated by FBXL22, leading to proteasomal degradation.

It is found in the cytoplasm. It localises to the membrane. The protein resides in the cytoskeleton. Its subcellular location is the myofibril. The protein localises to the sarcomere. It is found in the z line. In terms of biological role, muscle-specific filamin, which plays a central role in sarcomere assembly and organization. Critical for normal myogenesis, it probably functions as a large actin-cross-linking protein with structural functions at the Z lines in muscle cells. May be involved in reorganizing the actin cytoskeleton in response to signaling events. The chain is Filamin-C (Flnc) from Mus musculus (Mouse).